Here is an 830-residue protein sequence, read N- to C-terminus: Probable glucan 1,3-beta-glucosidase D (830 aa).

Over residues 1-34 (MPSQSRSRDRYRGRDTEYTRRRYPDEHDYSHDDH) the composition is skewed to basic and acidic residues. Residues 1-279 (MPSQSRSRDR…PPMDARWPKG (279 aa)) form a disordered region. The Cytoplasmic segment spans residues 1 to 301 (MPSQSRSRDR…GRPFWKQKKW (301 aa)). Residues 35 to 51 (DYDYDDDDDDNDDLEQD) show a composition bias toward acidic residues. 2 stretches are compositionally biased toward basic and acidic residues: residues 52–98 (VTER…ERRR) and 110–175 (QHRE…KHQS). Positions 181–194 (SASHLLSADALARL) are enriched in low complexity. Composition is skewed to basic and acidic residues over residues 198–215 (YEKE…AAKA), 228–243 (EQER…DRSR), and 253–264 (EEGRGPEMEFRR). A helical; Signal-anchor for type II membrane protein transmembrane segment spans residues 302-322 (LIGIGVVILILVIVIPVAVVV). The Extracellular portion of the chain corresponds to 323 to 830 (SKKHNDKPNA…PDFGSLPEYY (508 aa)). The interval 327 to 351 (NDKPNATTTQPDGTTPSNSNLDGLS) is disordered. Polar residues predominate over residues 330–348 (PNATTTQPDGTTPSNSNLD). 6 N-linked (GlcNAc...) asparagine glycosylation sites follow: Asn-331, Asn-376, Asn-381, Asn-393, Asn-546, and Asn-558. The active-site Proton donor is Glu-597. N-linked (GlcNAc...) asparagine glycosylation is found at Asn-610, Asn-636, Asn-669, and Asn-689. Catalysis depends on Glu-701, which acts as the Nucleophile.

This sequence belongs to the glycosyl hydrolase 5 (cellulase A) family.

Its subcellular location is the cell membrane. The catalysed reaction is Successive hydrolysis of beta-D-glucose units from the non-reducing ends of (1-&gt;3)-beta-D-glucans, releasing alpha-glucose.. Glucosidase involved in the degradation of cellulosic biomass. Active on lichenan. In Aspergillus clavatus (strain ATCC 1007 / CBS 513.65 / DSM 816 / NCTC 3887 / NRRL 1 / QM 1276 / 107), this protein is Probable glucan 1,3-beta-glucosidase D (exgD).